We begin with the raw amino-acid sequence, 392 residues long: Putative non-inhibitory serpin-10 (392 aa).

An RCL region spans residues 333-357 (GTTAVEATYSCCSPTYSGPESPKPR).

It belongs to the serpin family.

This is Putative non-inhibitory serpin-10 from Oryza sativa subsp. japonica (Rice).